Here is a 356-residue protein sequence, read N- to C-terminus: Chorismate synthase (356 aa).

NADP(+) is bound at residue Arg46. FMN contacts are provided by residues Arg122 to Ser124, Asn234 to Gly235, Gly274, Lys289 to Ser293, and Arg315.

The protein belongs to the chorismate synthase family. In terms of assembly, homotetramer. The cofactor is FMNH2.

The enzyme catalyses 5-O-(1-carboxyvinyl)-3-phosphoshikimate = chorismate + phosphate. Its pathway is metabolic intermediate biosynthesis; chorismate biosynthesis; chorismate from D-erythrose 4-phosphate and phosphoenolpyruvate: step 7/7. Catalyzes the anti-1,4-elimination of the C-3 phosphate and the C-6 proR hydrogen from 5-enolpyruvylshikimate-3-phosphate (EPSP) to yield chorismate, which is the branch point compound that serves as the starting substrate for the three terminal pathways of aromatic amino acid biosynthesis. This reaction introduces a second double bond into the aromatic ring system. This is Chorismate synthase from Campylobacter fetus subsp. fetus (strain 82-40).